Reading from the N-terminus, the 238-residue chain is Anti-sigma-K factor RskA (238 aa).

The Cytoplasmic segment spans residues 1–97; sequence MTSPQNDLLS…RSSSRRRAAA (97 aa). The chain crosses the membrane as a helical span at residues 98–118; that stretch reads VLSAAAAVVIGLGTLAVGYAL. Residues 119-238 are Extracellular-facing; it reads RPAPTPSTAE…TPVFAELPLT (120 aa).

It belongs to the anti-sigma-K factor family.

It localises to the cell membrane. Functionally, an anti-sigma factor for extracytoplasmic function (ECF) sigma factor SigK. ECF sigma factors are held in an inactive form by an anti-sigma factor until released by regulated intramembrane proteolysis (RIP). RIP occurs when an extracytoplasmic signal triggers a concerted proteolytic cascade to transmit information and elicit cellular responses. The membrane-spanning regulatory substrate protein is first cut extracytoplasmically (site-1 protease, S1P), then within the membrane itself (site-2 protease, S2P, Rip1), while cytoplasmic proteases finish degrading the regulatory protein, liberating the sigma factor. The protein is Anti-sigma-K factor RskA (rskA) of Mycolicibacterium vanbaalenii (strain DSM 7251 / JCM 13017 / BCRC 16820 / KCTC 9966 / NRRL B-24157 / PYR-1) (Mycobacterium vanbaalenii).